The primary structure comprises 209 residues: ATP-dependent Clp protease proteolytic subunit (209 aa).

S106 functions as the Nucleophile in the catalytic mechanism. Residue H131 is part of the active site.

It belongs to the peptidase S14 family. In terms of assembly, fourteen ClpP subunits assemble into 2 heptameric rings which stack back to back to give a disk-like structure with a central cavity, resembling the structure of eukaryotic proteasomes.

It is found in the cytoplasm. It catalyses the reaction Hydrolysis of proteins to small peptides in the presence of ATP and magnesium. alpha-casein is the usual test substrate. In the absence of ATP, only oligopeptides shorter than five residues are hydrolyzed (such as succinyl-Leu-Tyr-|-NHMec, and Leu-Tyr-Leu-|-Tyr-Trp, in which cleavage of the -Tyr-|-Leu- and -Tyr-|-Trp bonds also occurs).. In terms of biological role, cleaves peptides in various proteins in a process that requires ATP hydrolysis. Has a chymotrypsin-like activity. Plays a major role in the degradation of misfolded proteins. This is ATP-dependent Clp protease proteolytic subunit from Brucella melitensis biotype 2 (strain ATCC 23457).